Consider the following 198-residue polypeptide: ATP-dependent Clp protease proteolytic subunit 2 (198 aa).

The active-site Nucleophile is Ser-94. His-119 is a catalytic residue.

This sequence belongs to the peptidase S14 family. As to quaternary structure, fourteen ClpP subunits assemble into 2 heptameric rings which stack back to back to give a disk-like structure with a central cavity, resembling the structure of eukaryotic proteasomes.

It is found in the cytoplasm. It carries out the reaction Hydrolysis of proteins to small peptides in the presence of ATP and magnesium. alpha-casein is the usual test substrate. In the absence of ATP, only oligopeptides shorter than five residues are hydrolyzed (such as succinyl-Leu-Tyr-|-NHMec, and Leu-Tyr-Leu-|-Tyr-Trp, in which cleavage of the -Tyr-|-Leu- and -Tyr-|-Trp bonds also occurs).. Cleaves peptides in various proteins in a process that requires ATP hydrolysis. Has a chymotrypsin-like activity. Plays a major role in the degradation of misfolded proteins. This is ATP-dependent Clp protease proteolytic subunit 2 from Borreliella burgdorferi (strain ATCC 35210 / DSM 4680 / CIP 102532 / B31) (Borrelia burgdorferi).